The primary structure comprises 313 residues: Protein FixB (313 aa).

Leucine 255 to aspartate 283 serves as a coordination point for FAD.

This sequence belongs to the ETF alpha-subunit/FixB family. In terms of assembly, heterodimer of FixA and FixB.

It functions in the pathway amine and polyamine metabolism; carnitine metabolism. In terms of biological role, required for anaerobic carnitine reduction. May bring reductant to CaiA. This chain is Protein FixB, found in Escherichia coli (strain K12 / MC4100 / BW2952).